The following is a 259-amino-acid chain: tRNA pseudouridine synthase A (259 aa).

Residue aspartate 52 is the Nucleophile of the active site. Tyrosine 110 contributes to the substrate binding site.

Belongs to the tRNA pseudouridine synthase TruA family. As to quaternary structure, homodimer.

The catalysed reaction is uridine(38/39/40) in tRNA = pseudouridine(38/39/40) in tRNA. Formation of pseudouridine at positions 38, 39 and 40 in the anticodon stem and loop of transfer RNAs. The chain is tRNA pseudouridine synthase A from Coprothermobacter proteolyticus (strain ATCC 35245 / DSM 5265 / OCM 4 / BT).